The following is a 142-amino-acid chain: Large ribosomal subunit protein uL13 (142 aa).

Belongs to the universal ribosomal protein uL13 family. As to quaternary structure, part of the 50S ribosomal subunit.

Functionally, this protein is one of the early assembly proteins of the 50S ribosomal subunit, although it is not seen to bind rRNA by itself. It is important during the early stages of 50S assembly. This chain is Large ribosomal subunit protein uL13, found in Hahella chejuensis (strain KCTC 2396).